A 433-amino-acid polypeptide reads, in one-letter code: CinA-like protein (433 aa).

It belongs to the CinA family.

The sequence is that of CinA-like protein from Prochlorococcus marinus subsp. pastoris (strain CCMP1986 / NIES-2087 / MED4).